Reading from the N-terminus, the 154-residue chain is uncharacterized protein (154 aa).

This is an uncharacterized protein from Aquifex aeolicus (strain VF5).